The sequence spans 794 residues: ATP-dependent RNA helicase SUPV3L1, mitochondrial (794 aa).

The transit peptide at 1–30 (MRRCAWPLLRLSSRVGLALRHGGAVRLRQA) directs the protein to the mitochondrion. The Helicase ATP-binding domain maps to 182–322 (EARAIQRKII…AIDLVTELMY (141 aa)). 195–202 (GPTNSGKT) lines the ATP pocket. A Helicase C-terminal domain is found at 341–506 (VLDYALESLD…GLHPTPEQIE (166 aa)). Disordered regions lie at residues 678 to 741 (EVMS…HGRG) and 764 to 794 (EWQD…KKKK). A compositionally biased stretch (basic and acidic residues) spans 689–704 (TKRDARTVSDHRDAKS).

It belongs to the helicase family. Mg(2+) is required as a cofactor. It depends on Mn(2+) as a cofactor.

It localises to the nucleus. Its subcellular location is the mitochondrion matrix. The protein resides in the mitochondrion nucleoid. The catalysed reaction is ATP + H2O = ADP + phosphate + H(+). Major helicase player in mitochondrial RNA metabolism. Component of the mitochondrial degradosome (mtEXO) complex, that degrades 3' overhang double-stranded RNA with a 3'-to-5' directionality in an ATP-dependent manner. ATPase and ATP-dependent multisubstrate helicase, able to unwind double-stranded (ds) DNA and RNA, and RNA/DNA heteroduplexes in the 5'-to-3' direction. Plays a role in the RNA surveillance system in mitochondria; regulates the stability of mature mRNAs, the removal of aberrantly formed mRNAs and the rapid degradation of non coding processing intermediates. Also implicated in recombination and chromatin maintenance pathways. May protect cells from apoptosis. Associates with mitochondrial DNA. The sequence is that of ATP-dependent RNA helicase SUPV3L1, mitochondrial (SUPV3L1) from Gallus gallus (Chicken).